A 284-amino-acid chain; its full sequence is F-box protein PP2-B13 (284 aa).

One can recognise an F-box domain in the interval 1–44; sequence MMMLPEACVANILAFTSPADAFSSSEVSSVFRLAGDSDFVWEKF.

The chain is F-box protein PP2-B13 (PP2B13) from Arabidopsis thaliana (Mouse-ear cress).